Consider the following 68-residue polypeptide: UPF0435 protein SAOUHSC_02093 (68 aa).

This sequence belongs to the UPF0435 family.

In Staphylococcus aureus (strain NCTC 8325 / PS 47), this protein is UPF0435 protein SAOUHSC_02093.